We begin with the raw amino-acid sequence, 498 residues long: ATP synthase subunit alpha 1 (498 aa).

Residue 164–171 (GNRQSGKT) coordinates ATP.

The protein belongs to the ATPase alpha/beta chains family. F-type ATPases have 2 components, CF(1) - the catalytic core - and CF(0) - the membrane proton channel. CF(1) has five subunits: alpha(3), beta(3), gamma(1), delta(1), epsilon(1). CF(0) has three main subunits: a(1), b(2) and c(9-12). The alpha and beta chains form an alternating ring which encloses part of the gamma chain. CF(1) is attached to CF(0) by a central stalk formed by the gamma and epsilon chains, while a peripheral stalk is formed by the delta and b chains.

The protein localises to the cell membrane. It carries out the reaction ATP + H2O + 4 H(+)(in) = ADP + phosphate + 5 H(+)(out). In terms of biological role, produces ATP from ADP in the presence of a proton gradient across the membrane. The alpha chain is a regulatory subunit. The chain is ATP synthase subunit alpha 1 from Listeria welshimeri serovar 6b (strain ATCC 35897 / DSM 20650 / CCUG 15529 / CIP 8149 / NCTC 11857 / SLCC 5334 / V8).